The sequence spans 294 residues: DNA replication complex GINS protein SLD5 (294 aa).

It belongs to the GINS4/SLD5 family. In terms of assembly, component of the GINS complex which is a heterotetramer composed of SLD5, PSF1, PSF2 and PSF3. Interacts with PSF2.

Its subcellular location is the nucleus. Functionally, required for DNA replication. Functions as part of the GINS complex which plays an essential role in the initiation of DNA replication by binding to DNA replication origins and facilitating the assembly of the DNA replication machinery. The polypeptide is DNA replication complex GINS protein SLD5 (Saccharomyces cerevisiae (strain ATCC 204508 / S288c) (Baker's yeast)).